The following is a 305-amino-acid chain: Olfactory receptor 9G9 (305 aa).

Residues 1–27 (MQRSNHTVTEFILLGFTTDPGMQLGLF) are Extracellular-facing. N-linked (GlcNAc...) asparagine glycosylation is present at Asn5. Residues 28–48 (VVFLGVYSLTVVGNSTLIVLI) traverse the membrane as a helical segment. Residues 49–64 (CNDSHLHTPMYFVVGN) lie on the Cytoplasmic side of the membrane. A helical membrane pass occupies residues 65–85 (LSFLDLWYSSVYTPKILVICI). Residues 86–96 (SEDKSISFAGC) lie on the Extracellular side of the membrane. Cysteines 96 and 178 form a disulfide. The chain crosses the membrane as a helical span at residues 97–117 (LCQFFFSAGLAYSECCLLAAM). Over 118–138 (AYDRYVAISKPLLYAQAMSIK) the chain is Cytoplasmic. The chain crosses the membrane as a helical span at residues 139–159 (LCALLVAVSYCGGFINSSIIT). The Extracellular portion of the chain corresponds to 160–200 (KKTFSFNFCCENIIDDFFCDLLPLVKLACGEKGCYKFLMYF). The helical transmembrane segment at 201-221 (LLASNVICPAVLILASYLFII) threads the bilayer. Residues 222-239 (TSVLRISSSQGRLKAFST) are Cytoplasmic-facing. The chain crosses the membrane as a helical span at residues 240 to 260 (CSSHLTSVTLYYGSILYIYAL). At 261–271 (PRSSYSFDMDK) the chain is on the extracellular side. Residues 272–291 (IVSTFYTEVLPMLNPMIYSL) form a helical membrane-spanning segment. The Cytoplasmic portion of the chain corresponds to 292-305 (RNKDVKEALKKLLP).

This sequence belongs to the G-protein coupled receptor 1 family.

Its subcellular location is the cell membrane. In terms of biological role, odorant receptor. The protein is Olfactory receptor 9G9 (OR9G9) of Homo sapiens (Human).